Here is a 444-residue protein sequence, read N- to C-terminus: Trigger factor (444 aa).

In terms of domain architecture, PPIase FKBP-type spans 166-251; the sequence is GDQIVIDFKG…VKAVKAPKPA (86 aa).

The protein belongs to the FKBP-type PPIase family. Tig subfamily.

The protein localises to the cytoplasm. It carries out the reaction [protein]-peptidylproline (omega=180) = [protein]-peptidylproline (omega=0). In terms of biological role, involved in protein export. Acts as a chaperone by maintaining the newly synthesized protein in an open conformation. Functions as a peptidyl-prolyl cis-trans isomerase. The polypeptide is Trigger factor (Cereibacter sphaeroides (strain ATCC 17025 / ATH 2.4.3) (Rhodobacter sphaeroides)).